The sequence spans 104 residues: L-rhamnose mutarotase (104 aa).

Tyrosine 18 contributes to the substrate binding site. The Proton donor role is filled by histidine 22. Substrate is bound by residues tyrosine 41 and 76-77 (WW).

Belongs to the rhamnose mutarotase family. In terms of assembly, homodimer.

The protein localises to the cytoplasm. The enzyme catalyses alpha-L-rhamnose = beta-L-rhamnose. It participates in carbohydrate metabolism; L-rhamnose metabolism. Involved in the anomeric conversion of L-rhamnose. The sequence is that of L-rhamnose mutarotase from Burkholderia cenocepacia (strain HI2424).